Reading from the N-terminus, the 576-residue chain is Arginine--tRNA ligase (576 aa).

Positions 122-132 (PNVAKQMHVGH) match the 'HIGH' region motif.

The protein belongs to the class-I aminoacyl-tRNA synthetase family. Monomer.

The protein resides in the cytoplasm. The catalysed reaction is tRNA(Arg) + L-arginine + ATP = L-arginyl-tRNA(Arg) + AMP + diphosphate. The protein is Arginine--tRNA ligase of Yersinia pseudotuberculosis serotype IB (strain PB1/+).